The primary structure comprises 86 residues: ATP synthase subunit c (86 aa).

Helical transmembrane passes span 8–28 and 64–84; these read VLGC…GPGI and TTGL…PLLG.

Belongs to the ATPase C chain family. F-type ATPases have 2 components, F(1) - the catalytic core - and F(0) - the membrane proton channel. F(1) has five subunits: alpha(3), beta(3), gamma(1), delta(1), epsilon(1). F(0) has three main subunits: a(1), b(2) and c(10-14). The alpha and beta chains form an alternating ring which encloses part of the gamma chain. F(1) is attached to F(0) by a central stalk formed by the gamma and epsilon chains, while a peripheral stalk is formed by the delta and b chains.

It is found in the cell membrane. Its function is as follows. F(1)F(0) ATP synthase produces ATP from ADP in the presence of a proton or sodium gradient. F-type ATPases consist of two structural domains, F(1) containing the extramembraneous catalytic core and F(0) containing the membrane proton channel, linked together by a central stalk and a peripheral stalk. During catalysis, ATP synthesis in the catalytic domain of F(1) is coupled via a rotary mechanism of the central stalk subunits to proton translocation. Functionally, key component of the F(0) channel; it plays a direct role in translocation across the membrane. A homomeric c-ring of between 10-14 subunits forms the central stalk rotor element with the F(1) delta and epsilon subunits. In Lachnoclostridium phytofermentans (strain ATCC 700394 / DSM 18823 / ISDg) (Clostridium phytofermentans), this protein is ATP synthase subunit c.